A 184-amino-acid chain; its full sequence is Antigen Sm21.7 (184 aa).

The 36-residue stretch at 37-72 (LDMKQVNEWIALFDVDKDQKITFEEFCRGLGLKQNE) folds into the EF-hand domain. Residues Asp-50, Asp-52, Asp-54, Lys-56, and Glu-61 each coordinate Ca(2+).

The protein is Antigen Sm21.7 (SM21.7) of Schistosoma mansoni (Blood fluke).